Reading from the N-terminus, the 472-residue chain is 3-isopropylmalate dehydratase large subunit (472 aa).

[4Fe-4S] cluster-binding residues include cysteine 352, cysteine 413, and cysteine 416.

It belongs to the aconitase/IPM isomerase family. LeuC type 1 subfamily. Heterodimer of LeuC and LeuD. Requires [4Fe-4S] cluster as cofactor.

It catalyses the reaction (2R,3S)-3-isopropylmalate = (2S)-2-isopropylmalate. The protein operates within amino-acid biosynthesis; L-leucine biosynthesis; L-leucine from 3-methyl-2-oxobutanoate: step 2/4. Functionally, catalyzes the isomerization between 2-isopropylmalate and 3-isopropylmalate, via the formation of 2-isopropylmaleate. This Pseudomonas fluorescens (strain ATCC BAA-477 / NRRL B-23932 / Pf-5) protein is 3-isopropylmalate dehydratase large subunit.